The sequence spans 241 residues: Phosphoadenosine 5'-phosphosulfate reductase (241 aa).

Catalysis depends on C235, which acts as the Nucleophile; cysteine thiosulfonate intermediate.

This sequence belongs to the PAPS reductase family. CysH subfamily.

The protein resides in the cytoplasm. It catalyses the reaction [thioredoxin]-disulfide + sulfite + adenosine 3',5'-bisphosphate + 2 H(+) = [thioredoxin]-dithiol + 3'-phosphoadenylyl sulfate. Its pathway is sulfur metabolism; hydrogen sulfide biosynthesis; sulfite from sulfate: step 3/3. Catalyzes the formation of sulfite from phosphoadenosine 5'-phosphosulfate (PAPS) using thioredoxin as an electron donor. This is Phosphoadenosine 5'-phosphosulfate reductase from Xanthomonas axonopodis pv. citri (strain 306).